The sequence spans 203 residues: MFITFEGPDGSGKSTIIQKVYDYLIENNYDVIKTREPGGSPIAEKIRNLILDTENIKMGYRTEALLYAASRAQHVEETILPALNENKIVLCDRFLISSLAYQGVGRGLGIENVRNINEFAINGVFPDFVLFFDVDPITTLKRKSSLDTADRLEKEGNNFHERVYNGYKEILNSEKNIEIIDATQSVEDVFSQCIEVLKRRNVL.

7–14 (GPDGSGKS) is a binding site for ATP.

The protein belongs to the thymidylate kinase family.

The catalysed reaction is dTMP + ATP = dTDP + ADP. In terms of biological role, phosphorylation of dTMP to form dTDP in both de novo and salvage pathways of dTTP synthesis. The sequence is that of Thymidylate kinase from Finegoldia magna (strain ATCC 29328 / DSM 20472 / WAL 2508) (Peptostreptococcus magnus).